The chain runs to 429 residues: Histidine--tRNA ligase (429 aa).

Belongs to the class-II aminoacyl-tRNA synthetase family. As to quaternary structure, homodimer.

Its subcellular location is the cytoplasm. The catalysed reaction is tRNA(His) + L-histidine + ATP = L-histidyl-tRNA(His) + AMP + diphosphate + H(+). The sequence is that of Histidine--tRNA ligase from Stutzerimonas stutzeri (strain A1501) (Pseudomonas stutzeri).